Here is a 219-residue protein sequence, read N- to C-terminus: Uracil-DNA glycosylase (219 aa).

The Proton acceptor role is filled by D61.

The protein belongs to the uracil-DNA glycosylase (UDG) superfamily. UNG family.

The protein localises to the cytoplasm. The enzyme catalyses Hydrolyzes single-stranded DNA or mismatched double-stranded DNA and polynucleotides, releasing free uracil.. Functionally, excises uracil residues from the DNA which can arise as a result of misincorporation of dUMP residues by DNA polymerase or due to deamination of cytosine. The protein is Uracil-DNA glycosylase of Neisseria gonorrhoeae (strain ATCC 700825 / FA 1090).